Reading from the N-terminus, the 697-residue chain is Potassium-transporting ATPase ATP-binding subunit (697 aa).

4 helical membrane passes run 36-56, 66-86, 218-238, and 253-273; these read VMFV…RDLI, LQII…EAVA, IALN…TATI, and VLVA…LSAI. Asp-306 functions as the 4-aspartylphosphate intermediate in the catalytic mechanism. Residues Asp-343, Glu-347, 376–383, and Lys-394 contribute to the ATP site; that span reads FTAQTRMS. Mg(2+) is bound by residues Asp-526 and Asp-530. The next 3 membrane-spanning stretches (helical) occupy residues 595-615, 631-651, and 669-689; these read YFAI…QSTG, AILS…PLSL, and LLVY…IIDM.

Belongs to the cation transport ATPase (P-type) (TC 3.A.3) family. Type IA subfamily. In terms of assembly, the system is composed of three essential subunits: KdpA, KdpB and KdpC.

Its subcellular location is the cell inner membrane. It carries out the reaction K(+)(out) + ATP + H2O = K(+)(in) + ADP + phosphate + H(+). Part of the high-affinity ATP-driven potassium transport (or Kdp) system, which catalyzes the hydrolysis of ATP coupled with the electrogenic transport of potassium into the cytoplasm. This subunit is responsible for energy coupling to the transport system and for the release of the potassium ions to the cytoplasm. The sequence is that of Potassium-transporting ATPase ATP-binding subunit from Mesorhizobium japonicum (strain LMG 29417 / CECT 9101 / MAFF 303099) (Mesorhizobium loti (strain MAFF 303099)).